The chain runs to 267 residues: Indole-3-glycerol phosphate synthase (267 aa).

Belongs to the TrpC family.

It carries out the reaction 1-(2-carboxyphenylamino)-1-deoxy-D-ribulose 5-phosphate + H(+) = (1S,2R)-1-C-(indol-3-yl)glycerol 3-phosphate + CO2 + H2O. The protein operates within amino-acid biosynthesis; L-tryptophan biosynthesis; L-tryptophan from chorismate: step 4/5. The chain is Indole-3-glycerol phosphate synthase from Dichelobacter nodosus (strain VCS1703A).